A 648-amino-acid polypeptide reads, in one-letter code: Probable LRR receptor-like serine/threonine-protein kinase At4g30520 (648 aa).

The signal sequence occupies residues 1 to 30 (MVVVTKKTMKIQIHLLYSFLFLCFSTLTLS). Residues 31–238 (SEPRNPEVEA…SSSGRRSNRL (208 aa)) lie on the Extracellular side of the membrane. Asn99 and Asn112 each carry an N-linked (GlcNAc...) asparagine glycan. 4 LRR repeats span residues 100–125 (LTNL…GFLP), 127–148 (LQTL…IDQL), 149–172 (SSLQ…LSQI), and 174–199 (HLSF…TFNV). Asn158 and Asn184 each carry an N-linked (GlcNAc...) asparagine glycan. The helical transmembrane segment at 239–259 (AIALSVSLGSVVILVLALGSF) threads the bilayer. The Cytoplasmic portion of the chain corresponds to 260–648 (CWYRKKQRRL…SFAMELSGPR (389 aa)). Position 300 is a phosphothreonine (Thr300). The Protein kinase domain maps to 303-582 (FSSKNILGAG…EGDGLAERWA (280 aa)). An ATP-binding site is contributed by 309 to 317 (LGAGGFGNV). The residue at position 326 (Thr326) is a Phosphothreonine. Lys331 lines the ATP pocket. 2 positions are modified to phosphoserine: Ser384 and Ser387. Asp426 serves as the catalytic Proton acceptor. Thr459, Thr460, and Thr465 each carry phosphothreonine. Residue Tyr473 is modified to Phosphotyrosine. Ser475 is subject to Phosphoserine. Thr476 is modified (phosphothreonine). Ser480 carries the post-translational modification Phosphoserine. Thr555 carries the post-translational modification Phosphothreonine.

The protein belongs to the protein kinase superfamily. Ser/Thr protein kinase family.

The protein resides in the cell membrane. The catalysed reaction is L-seryl-[protein] + ATP = O-phospho-L-seryl-[protein] + ADP + H(+). The enzyme catalyses L-threonyl-[protein] + ATP = O-phospho-L-threonyl-[protein] + ADP + H(+). The sequence is that of Probable LRR receptor-like serine/threonine-protein kinase At4g30520 from Arabidopsis thaliana (Mouse-ear cress).